The primary structure comprises 298 residues: Rhodomycin D methylesterase DauP (298 aa).

The region spanning 25–277 (PLLLIAGGNL…VEIENMGHAL (253 aa)) is the AB hydrolase-1 domain.

It belongs to the methyl esterase DnrP family.

The enzyme catalyses rhodomycin D + H2O = 10-carboxy-13-deoxycarminomycin + methanol + H(+). It catalyses the reaction 4-O-methylrhodomycin D + H2O = 10-carboxy-13-deoxydaunorubicin + methanol + H(+). It functions in the pathway antibiotic biosynthesis; daunorubicin biosynthesis. It participates in antibiotic biosynthesis; carminomycin biosynthesis. Involved in the biosynthesis of the anthracyclines carminomycin and daunorubicin (daunomycin) which are aromatic polyketide antibiotics that exhibit high cytotoxicity and are widely applied in the chemotherapy of a variety of cancers. Catalyzes the removal of methyl group from the carbomethoxy group of rhodomycin D (10-carbomethoxy-13-deoxycarminomycin) and 4-O-methylrhodomycin D to yield 10-carboxy-13-deoxycarminomycin and 10-carboxy-13-deoxydaunorubicin, respectively. Could be also involved in the decarboxylation of 10-carboxy-13-deoxycarminomycin and 10-carboxy-13-deoxydaunorubicin to yield 13-deoxycarminomycin and 13-deoxydaunorubicin, respectively. It seems that DauK may influence the ability of DauP to carry out the decarboxylation. The chain is Rhodomycin D methylesterase DauP (dauP) from Streptomyces sp. (strain C5).